We begin with the raw amino-acid sequence, 326 residues long: Fructose-1,6-bisphosphatase class 1 (326 aa).

This sequence belongs to the FBPase class 1 family. Homotetramer.

Its subcellular location is the cytoplasm. It carries out the reaction beta-D-fructose 1,6-bisphosphate + H2O = beta-D-fructose 6-phosphate + phosphate. Its pathway is carbohydrate biosynthesis; gluconeogenesis. This Methylobacterium sp. (strain 4-46) protein is Fructose-1,6-bisphosphatase class 1.